Reading from the N-terminus, the 324-residue chain is Beta-ketoacyl-[acyl-carrier-protein] synthase III (324 aa).

Active-site residues include C114 and H251. The tract at residues 252 to 256 is ACP-binding; sequence QANRR. The active site involves N281.

Belongs to the thiolase-like superfamily. FabH family. In terms of assembly, homodimer.

Its subcellular location is the cytoplasm. The enzyme catalyses malonyl-[ACP] + acetyl-CoA + H(+) = 3-oxobutanoyl-[ACP] + CO2 + CoA. The protein operates within lipid metabolism; fatty acid biosynthesis. Catalyzes the condensation reaction of fatty acid synthesis by the addition to an acyl acceptor of two carbons from malonyl-ACP. Catalyzes the first condensation reaction which initiates fatty acid synthesis and may therefore play a role in governing the total rate of fatty acid production. Possesses both acetoacetyl-ACP synthase and acetyl transacylase activities. Its substrate specificity determines the biosynthesis of branched-chain and/or straight-chain of fatty acids. The sequence is that of Beta-ketoacyl-[acyl-carrier-protein] synthase III from Paramagnetospirillum magneticum (strain ATCC 700264 / AMB-1) (Magnetospirillum magneticum).